Reading from the N-terminus, the 438-residue chain is Mitochondrial distribution and morphology protein 12 (438 aa).

The SMP-LTD domain occupies 1–438; sequence MSIEVDWAAA…VYPSFWTFLV (438 aa). Disordered regions lie at residues 110 to 154, 185 to 277, and 353 to 379; these read SFSH…TSTL, SDSG…MRER, and GSEQSQGSQNPSDDGRPRSGGDQKDKE. Residues 212–226 show a composition bias toward polar residues; that stretch reads DTTNSTSRPSTANTL. The segment covering 227–245 has biased composition (low complexity); that stretch reads PSHPSLGHSGSSGSNPHTS. Positions 354–364 are enriched in polar residues; it reads SEQSQGSQNPS. The span at 365–379 shows a compositional bias: basic and acidic residues; it reads DDGRPRSGGDQKDKE.

It belongs to the MDM12 family. As to quaternary structure, component of the ER-mitochondria encounter structure (ERMES) or MDM complex, composed of mmm1, mdm10, mdm12 and mdm34. A mmm1 homodimer associates with one molecule of mdm12 on each side in a pairwise head-to-tail manner, and the SMP-LTD domains of mmm1 and mdm12 generate a continuous hydrophobic tunnel for phospholipid trafficking.

It localises to the mitochondrion outer membrane. The protein localises to the endoplasmic reticulum membrane. Functionally, component of the ERMES/MDM complex, which serves as a molecular tether to connect the endoplasmic reticulum (ER) and mitochondria. Components of this complex are involved in the control of mitochondrial shape and protein biogenesis, and function in nonvesicular lipid trafficking between the ER and mitochondria. Mdm12 is required for the interaction of the ER-resident membrane protein mmm1 and the outer mitochondrial membrane-resident beta-barrel protein mdm10. The mdm12-mmm1 subcomplex functions in the major beta-barrel assembly pathway that is responsible for biogenesis of all mitochondrial outer membrane beta-barrel proteins, and acts in a late step after the SAM complex. The mdm10-mdm12-mmm1 subcomplex further acts in the TOM40-specific pathway after the action of the mdm12-mmm1 complex. Essential for establishing and maintaining the structure of mitochondria and maintenance of mtDNA nucleoids. This chain is Mitochondrial distribution and morphology protein 12, found in Penicillium rubens (strain ATCC 28089 / DSM 1075 / NRRL 1951 / Wisconsin 54-1255) (Penicillium chrysogenum).